The primary structure comprises 425 residues: ATP-dependent RNA helicase eIF4A (425 aa).

The short motif at 38–66 (DTWEDYGLKEDLLKGIYSIGFETPSFIQK) is the Q motif element. The 173-residue stretch at 69–241 (IQPIIDGRDI…EEILINPVII (173 aa)) folds into the Helicase ATP-binding domain. 82-89 (AQSGTGKT) lines the ATP pocket. Residues 187–190 (DEAD) carry the DEAD box motif. One can recognise a Helicase C-terminal domain in the interval 252–425 (GIRQYFIDLR…KELPADFSFQ (174 aa)).

The protein belongs to the DEAD box helicase family. eIF4A subfamily. Component of the eIF4F complex, which composition varies with external and internal environmental conditions. It is composed of at least eIF4A, eIF4E and eIF4G.

The protein localises to the cytoplasm. It catalyses the reaction ATP + H2O = ADP + phosphate + H(+). In terms of biological role, ATP-dependent RNA helicase which is a subunit of the eIF4F complex involved in cap recognition and is required for mRNA binding to ribosome. In the current model of translation initiation, eIF4A unwinds RNA secondary structures in the 5'-UTR of mRNAs which is necessary to allow efficient binding of the small ribosomal subunit, and subsequent scanning for the initiator codon. The protein is ATP-dependent RNA helicase eIF4A (TIF1) of Encephalitozoon cuniculi (strain GB-M1) (Microsporidian parasite).